Here is a 450-residue protein sequence, read N- to C-terminus: Phosphoglucosamine mutase (450 aa).

The Phosphoserine intermediate role is filled by Ser-101. The Mg(2+) site is built by Ser-101, Asp-242, Asp-244, and Asp-246. Position 101 is a phosphoserine (Ser-101).

It belongs to the phosphohexose mutase family. Requires Mg(2+) as cofactor. In terms of processing, activated by phosphorylation.

It carries out the reaction alpha-D-glucosamine 1-phosphate = D-glucosamine 6-phosphate. In terms of biological role, catalyzes the conversion of glucosamine-6-phosphate to glucosamine-1-phosphate. This chain is Phosphoglucosamine mutase, found in Rhodopseudomonas palustris (strain TIE-1).